The following is a 130-amino-acid chain: Small ribosomal subunit protein uS11c (130 aa).

It belongs to the universal ribosomal protein uS11 family. In terms of assembly, part of the 30S ribosomal subunit.

It localises to the plastid. The protein localises to the chloroplast. The chain is Small ribosomal subunit protein uS11c from Cycas taitungensis (Prince sago).